The primary structure comprises 247 residues: Uridylate kinase (247 aa).

K19–G22 lines the ATP pocket. Residue G61 coordinates UMP. ATP-binding residues include G62 and R66. Residues D81 and T142–T149 contribute to the UMP site. ATP is bound by residues T169, Q170, Y175, and D178.

It belongs to the UMP kinase family. As to quaternary structure, homohexamer.

Its subcellular location is the cytoplasm. The catalysed reaction is UMP + ATP = UDP + ADP. It participates in pyrimidine metabolism; CTP biosynthesis via de novo pathway; UDP from UMP (UMPK route): step 1/1. Inhibited by UTP. Functionally, catalyzes the reversible phosphorylation of UMP to UDP. This chain is Uridylate kinase, found in Wolbachia pipientis wMel.